Reading from the N-terminus, the 362-residue chain is 4-hydroxytryptamine kinase (362 aa).

Residues asparagine 37, lysine 57, and 118–120 contribute to the ATP site; that span reads QDV. Aspartate 224 is a catalytic residue. 249–251 contacts ATP; that stretch reads DWE.

This sequence belongs to the methylthioribose kinase family. In terms of assembly, monomer. Mg(2+) serves as cofactor.

It carries out the reaction 4-hydroxytryptamine + ATP = norbaeocystin + ADP + H(+). It catalyses the reaction psilocin + ATP = psilocybin + ADP + H(+). The catalysed reaction is 4-hydroxy-N,N,N-trimethyltryptamine + ATP = aeruginascin + ADP + H(+). It functions in the pathway secondary metabolite biosynthesis. Functionally, 4-hydroxytryptamine kinase; part of the gene cluster that mediates the biosynthesis of psilocybin, a psychotropic tryptamine-derived natural product. The first step in the pathway is the decarboxylation of L-tryptophan to tryptamine by the decarboxylase psiD. 4-hydroxy-L-tryptophan is accepted as substrate by psiD as well. The cytochrome P450 monooxygenase psiH then converts tryptamine to 4-hydroxytryptamine. The kinase psiK catalyzes the 4-O-phosphorylation step by converting 4-hydroxytryptamine into norbaeocystin. The methyltransferase psiM then catalyzes iterative methyl transfer to the amino group of norbaeocystin to yield psilocybin via a monomethylated intermediate, baeocystin. 4-hydroxy-6-methyl-l-tryptophancan also be converted the decarboxylase PsiD, kinase PsiK, and methyltransferase PsiM into respectively 6-methyl-norbaeocystin, 6-methylbaeocystin, and 6-methylpsilocybin. PsiK kinase can also turn psilocin into psilocybin. This activity may represent a protective mechanism to rephosphorylate the unstable psilocin to the stable psilocybin in case of intracellular ester cleavage. Moreover, psiK is able to O-phosphorylate the quaternary amine 4-hydroxy-N,N,N-trimethyltryptamine (4-OH-TMT) to yield aeruginascin, another bioactive compound found in Psilocybe species. The chain is 4-hydroxytryptamine kinase from Psilocybe cubensis (Psychedelic mushroom).